A 485-amino-acid chain; its full sequence is Betaine aldehyde dehydrogenase (485 aa).

K(+) is bound by residues Thr23, Ile24, and Asp90. Residue 147–149 (GAW) participates in NAD(+) binding. Catalysis depends on Lys159, which acts as the Charge relay system. NAD(+) is bound by residues 173-176 (KPSE) and 226-229 (EVGT). Leu241 contributes to the K(+) binding site. The active-site Proton acceptor is Glu247. NAD(+) contacts are provided by Gly249, Cys281, and Glu382. Cys281 functions as the Nucleophile in the catalytic mechanism. A Cysteine sulfenic acid (-SOH) modification is found at Cys281. K(+) contacts are provided by Lys452 and Gly455. Glu459 functions as the Charge relay system in the catalytic mechanism.

Belongs to the aldehyde dehydrogenase family. Dimer of dimers. It depends on K(+) as a cofactor.

The catalysed reaction is betaine aldehyde + NAD(+) + H2O = glycine betaine + NADH + 2 H(+). The protein operates within amine and polyamine biosynthesis; betaine biosynthesis via choline pathway; betaine from betaine aldehyde: step 1/1. Involved in the biosynthesis of the osmoprotectant glycine betaine. Catalyzes the irreversible oxidation of betaine aldehyde to the corresponding acid. This chain is Betaine aldehyde dehydrogenase, found in Marinomonas sp. (strain MWYL1).